Reading from the N-terminus, the 400-residue chain is NADH-quinone oxidoreductase subunit D (400 aa).

The protein belongs to the complex I 49 kDa subunit family. In terms of assembly, NDH-1 is composed of 14 different subunits. Subunits NuoB, C, D, E, F, and G constitute the peripheral sector of the complex.

Its subcellular location is the cell inner membrane. It carries out the reaction a quinone + NADH + 5 H(+)(in) = a quinol + NAD(+) + 4 H(+)(out). In terms of biological role, NDH-1 shuttles electrons from NADH, via FMN and iron-sulfur (Fe-S) centers, to quinones in the respiratory chain. The immediate electron acceptor for the enzyme in this species is believed to be a menaquinone. Couples the redox reaction to proton translocation (for every two electrons transferred, four hydrogen ions are translocated across the cytoplasmic membrane), and thus conserves the redox energy in a proton gradient. The chain is NADH-quinone oxidoreductase subunit D from Chlorobium phaeobacteroides (strain DSM 266 / SMG 266 / 2430).